The following is a 219-amino-acid chain: Envelope protein US9 homolog (219 aa).

The Intravirion segment spans residues 1 to 193 (MEKAEAAAVV…RHRRRRVALT (193 aa)). The Di-leucine internalization motif signature appears at 145–146 (LL). Residues 153 to 168 (DYDSESGCYYSESDNE) form an acidic region. Phosphoserine; by host CK2 occurs at positions 163 and 165. Residues 194–214 (VAGVILVVVLCAISGIVGAFL) form a helical; Signal-anchor for type II membrane protein membrane-spanning segment. Topologically, residues 215–219 (ARVFP) are virion surface.

The protein belongs to the alphaherpesvirinae envelope protein US9 family. Post-translationally, phosphorylated on serines within the acidic cluster. Phosphorylation determines whether endocytosed viral US9 traffics to the trans-Golgi network or recycles to the cell membrane.

It is found in the virion membrane. The protein localises to the host Golgi apparatus membrane. Its subcellular location is the host smooth endoplasmic reticulum membrane. It localises to the host cell membrane. In terms of biological role, essential for the anterograde spread of the infection throughout the host nervous system. Together with the gE/gI heterodimer, US9 is involved in the sorting and transport of viral structural components toward axon tips. The polypeptide is Envelope protein US9 homolog (Equine herpesvirus 1 (strain Ab4p) (EHV-1)).